The primary structure comprises 784 residues: Ubiquitin carboxyl-terminal hydrolase 1 (784 aa).

Disordered regions lie at residues 1–21 and 33–54; these read MPGVIPSESNGLSRGSPSKKN and TKRALDFTDSQEDEEKASEYRG. The span at 7–16 shows a compositional bias: polar residues; the sequence is SESNGLSRGS. Residues serine 16, serine 42, and serine 67 each carry the phosphoserine modification. One can recognise a USP domain in the interval 81–784; sequence VGLNNLGNTC…TPYLLFYKKL (704 aa). Residue cysteine 90 is the Nucleophile of the active site. Basic and acidic residues-rich tracts occupy residues 232 to 243 and 252 to 264; these read KVEEKSLQKEET and DSTRNLDDLKEQL. 2 disordered regions span residues 232–341 and 363–411; these read KVEE…KINW and TNQR…SSEA. Positions 389-407 are enriched in polar residues; the sequence is NTVNGSGPASPGSSVTPVD. Serine 475 carries the post-translational modification Phosphoserine. Catalysis depends on histidine 593, which acts as the Proton acceptor. The disordered stretch occupies residues 686 to 723; that stretch reads PEKVVGTPFTDSRNSETNDTNGTQESDRSKESSDQTGI. Residues 694–709 are compositionally biased toward polar residues; the sequence is FTDSRNSETNDTNGTQ. Serine 767 bears the Phosphoserine mark.

It belongs to the peptidase C19 family. As to quaternary structure, interacts with FANCD2 and PCNA. Interacts with WDR48. Interacts with ATAD5; the interaction regulates USP1-mediated PCNA deubiquitination. Autocatalytic cleavage of USP1 following UV irradiation inactivates it, leading to an increase in ubiquitinated PCNA, recruitment of POLH and translesion synthesis. Post-translationally, ubiquitinated by the CRL2(KLHDC2) complex following autocatalytic cleavage, leading to its degradation: the CRL2(KLHDC2) complex recognizes the diglycine (Gly-Gly) at the C-terminus.

The protein resides in the nucleus. It carries out the reaction Thiol-dependent hydrolysis of ester, thioester, amide, peptide and isopeptide bonds formed by the C-terminal Gly of ubiquitin (a 76-residue protein attached to proteins as an intracellular targeting signal).. In terms of biological role, negative regulator of DNA damage repair which specifically deubiquitinates monoubiquitinated FANCD2. Also involved in PCNA-mediated translesion synthesis (TLS) by deubiquitinating monoubiquitinated PCNA. Has almost no deubiquitinating activity by itself and requires the interaction with WDR48 to have a high activity. This is Ubiquitin carboxyl-terminal hydrolase 1 from Rattus norvegicus (Rat).